A 122-amino-acid polypeptide reads, in one-letter code: Large ribosomal subunit protein bL19 (122 aa).

Belongs to the bacterial ribosomal protein bL19 family.

Functionally, this protein is located at the 30S-50S ribosomal subunit interface and may play a role in the structure and function of the aminoacyl-tRNA binding site. The sequence is that of Large ribosomal subunit protein bL19 (rplS) from Synechocystis sp. (strain ATCC 27184 / PCC 6803 / Kazusa).